The sequence spans 136 residues: MSLIKEFKAFASRGNVIDMAVGIIIGAAFGKIVSSFVADVIMPPIGIILGGVNFSDLSIVLQAAQGDAPSVVIAYGKFIQTVIDFTIIAFAIFMGLKAINTLKRKEEEAPKAPPTPTKEEELLSEIRDLLKAQQEK.

The next 2 helical transmembrane spans lie at Ala9–Phe29 and Ile79–Ile99.

This sequence belongs to the MscL family. Homopentamer.

It is found in the cell inner membrane. Functionally, channel that opens in response to stretch forces in the membrane lipid bilayer. May participate in the regulation of osmotic pressure changes within the cell. This chain is Large-conductance mechanosensitive channel, found in Shewanella sp. (strain W3-18-1).